The primary structure comprises 186 residues: Coiled-coil domain-containing protein ORF13 (186 aa).

2 coiled-coil regions span residues Gly2–Lys30 and Leu63–Lys85.

The polypeptide is Coiled-coil domain-containing protein ORF13 (Helicobacter pylori (strain 35A)).